Consider the following 103-residue polypeptide: Large ribosomal subunit protein bL21 (103 aa).

Belongs to the bacterial ribosomal protein bL21 family. In terms of assembly, part of the 50S ribosomal subunit. Contacts protein L20.

Functionally, this protein binds to 23S rRNA in the presence of protein L20. This is Large ribosomal subunit protein bL21 from Clostridium botulinum (strain Alaska E43 / Type E3).